Reading from the N-terminus, the 423-residue chain is Zinc finger and BTB domain-containing protein 6 (423 aa).

Positions 33–97 (CDVSIYINDT…CYTGALEVKR (65 aa)) constitute a BTB domain. Residue S201 is modified to Phosphoserine. 4 consecutive C2H2-type zinc fingers follow at residues 300–322 (HQCP…LKMH), 325–347 (FLCL…IRGH), 353–375 (FQCT…LNIH), and 381–404 (YKCH…TSVH).

It localises to the nucleus. In terms of biological role, may be involved in transcriptional regulation. The sequence is that of Zinc finger and BTB domain-containing protein 6 (Zbtb6) from Mus musculus (Mouse).